The chain runs to 353 residues: Mitochondrial distribution and morphology protein 12 (353 aa).

Residues 1-330 (MSFDIKWENL…WPSWICLDMN (330 aa)) enclose the SMP-LTD domain. 3 stretches are compositionally biased toward acidic residues: residues 64–75 (DEFYEDTTDSPE), 84–103 (TGDD…DDDG), and 330–342 (NDDD…EENP). Disordered regions lie at residues 64-140 (DEFY…NRSR) and 330-353 (NDDD…HVGS).

Belongs to the MDM12 family. As to quaternary structure, component of the ER-mitochondria encounter structure (ERMES) or MDM complex, composed of MMM1, MDM10, MDM12 and MDM34. An MMM1 homodimer associates with one molecule of MDM12 on each side in a pairwise head-to-tail manner, and the SMP-LTD domains of MMM1 and MDM12 generate a continuous hydrophobic tunnel for phospholipid trafficking.

It is found in the mitochondrion outer membrane. Its subcellular location is the endoplasmic reticulum membrane. Component of the ERMES/MDM complex, which serves as a molecular tether to connect the endoplasmic reticulum (ER) and mitochondria. Components of this complex are involved in the control of mitochondrial shape and protein biogenesis, and function in nonvesicular lipid trafficking between the ER and mitochondria. MDM12 is required for the interaction of the ER-resident membrane protein MMM1 and the outer mitochondrial membrane-resident beta-barrel protein MDM10. The MDM12-MMM1 subcomplex functions in the major beta-barrel assembly pathway that is responsible for biogenesis of all mitochondrial outer membrane beta-barrel proteins, and acts in a late step after the SAM complex. The MDM10-MDM12-MMM1 subcomplex further acts in the TOM40-specific pathway after the action of the MDM12-MMM1 complex. Essential for establishing and maintaining the structure of mitochondria and maintenance of mtDNA nucleoids. The chain is Mitochondrial distribution and morphology protein 12 from Candida tropicalis (strain ATCC MYA-3404 / T1) (Yeast).